A 234-amino-acid polypeptide reads, in one-letter code: Venom allergen 3 (234 aa).

The signal sequence occupies residues 1–22; sequence MELIVSILWLAITAENLANTLA. Cystine bridges form between cysteine 26-cysteine 41, cysteine 31-cysteine 125, cysteine 52-cysteine 118, and cysteine 198-cysteine 216. Positions 69–218 constitute an SCP domain; it reads VNKHNELRQR…WTKHYLVCNY (150 aa). The disordered stretch occupies residues 80 to 99; that stretch reads ASGKEMRGTNGPQPPAVKMP.

The protein belongs to the CRISP family. In terms of tissue distribution, expressed by the venom gland.

The protein resides in the secreted. The polypeptide is Venom allergen 3 (Solenopsis invicta (Red imported fire ant)).